Here is an 89-residue protein sequence, read N- to C-terminus: UPF0297 protein SUB1776 (89 aa).

It belongs to the UPF0297 family.

The chain is UPF0297 protein SUB1776 from Streptococcus uberis (strain ATCC BAA-854 / 0140J).